A 90-amino-acid polypeptide reads, in one-letter code: Protein S100-A6 (90 aa).

EF-hand domains are found at residues 12–47 (LVAI…IGAK) and 48–83 (LQDA…LAMI). Ca(2+) is bound by residues Thr-28 and Glu-33. An N6-acetyllysine modification is found at Lys-40. Lys-47 carries the post-translational modification N6-acetyllysine; alternate. Lys-47 bears the N6-succinyllysine; alternate mark. Ca(2+) contacts are provided by Asp-61, Asn-63, Asp-65, and Glu-72.

This sequence belongs to the S-100 family. Homodimer; head to tail assembly of 2 subunits. Interacts with CACYBP in a calcium-dependent manner. Interacts with ANXA2 and ANXA11 (via N-terminus). Interacts with SUGT1. Interacts with TP53; has higher affinity for TP53 that is phosphorylated on its N-terminal domain, and lower affinity for TP53 that is phosphorylated on its C-terminal domain. Interacts with tropomyosin. Interacts with FKBP4. Interacts with PPP5C (via TPR repeats); the interaction is calcium-dependent and modulates PPP5C activity. Interacts with TPPP; this interaction inhibits TPPP dimerization.

The protein resides in the nucleus envelope. It is found in the cytoplasm. It localises to the cell membrane. Functionally, may function as calcium sensor and modulator, contributing to cellular calcium signaling. May function by interacting with other proteins, such as TPR-containing proteins, and indirectly play a role in many physiological processes such as the reorganization of the actin cytoskeleton and in cell motility. Binds 2 calcium ions. Calcium binding is cooperative. The polypeptide is Protein S100-A6 (S100A6) (Sus scrofa (Pig)).